A 547-amino-acid polypeptide reads, in one-letter code: Threonylcarbamoyladenosine tRNA methylthiotransferase (547 aa).

The interval 30–51 is disordered; it reads ARKSVVPRARKHKQETGEQMQT. Residues 59-167 form the MTTase N-terminal domain; it reads QKVWLKTWGC…VVEVVDEAIK (109 aa). [4Fe-4S] cluster contacts are provided by C68, C104, C133, C209, C213, and C216. The Radical SAM core domain maps to 195–426; the sequence is RKNPLIEIIS…ALFHSYRPYD (232 aa). The region spanning 426–488 is the TRAM domain; the sequence is DHKMGEQQQV…KHYMKGRPLE (63 aa). Residues 527–547 traverse the membrane as a helical segment; the sequence is ILAVVLLLSAVLLALLMEKLL.

Belongs to the methylthiotransferase family. CDKAL1 subfamily. It depends on [4Fe-4S] cluster as a cofactor.

The protein localises to the endoplasmic reticulum membrane. It carries out the reaction N(6)-L-threonylcarbamoyladenosine(37) in tRNA + (sulfur carrier)-SH + AH2 + 2 S-adenosyl-L-methionine = 2-methylsulfanyl-N(6)-L-threonylcarbamoyladenosine(37) in tRNA + (sulfur carrier)-H + 5'-deoxyadenosine + L-methionine + A + S-adenosyl-L-homocysteine + 2 H(+). Its function is as follows. Catalyzes the methylthiolation of N6-threonylcarbamoyladenosine (t(6)A), leading to the formation of 2-methylthio-N6-threonylcarbamoyladenosine (ms(2)t(6)A) at position 37 in tRNAs that read codons beginning with adenine. This Danio rerio (Zebrafish) protein is Threonylcarbamoyladenosine tRNA methylthiotransferase (cdkal1).